A 405-amino-acid chain; its full sequence is L-carnitine CoA-transferase (405 aa).

2 residues coordinate CoA: K97 and R104. Residue D169 is the Nucleophile of the active site.

This sequence belongs to the CoA-transferase III family. CaiB subfamily. In terms of assembly, homodimer.

It localises to the cytoplasm. It carries out the reaction crotonobetainyl-CoA + (R)-carnitine = crotonobetaine + (R)-carnitinyl-CoA. The catalysed reaction is 4-(trimethylamino)butanoyl-CoA + (R)-carnitine = (R)-carnitinyl-CoA + 4-(trimethylamino)butanoate. It functions in the pathway amine and polyamine metabolism; carnitine metabolism. Functionally, catalyzes the reversible transfer of the CoA moiety from gamma-butyrobetainyl-CoA to L-carnitine to generate L-carnitinyl-CoA and gamma-butyrobetaine. Is also able to catalyze the reversible transfer of the CoA moiety from gamma-butyrobetainyl-CoA or L-carnitinyl-CoA to crotonobetaine to generate crotonobetainyl-CoA. In Escherichia coli O17:K52:H18 (strain UMN026 / ExPEC), this protein is L-carnitine CoA-transferase.